We begin with the raw amino-acid sequence, 132 residues long: Pro-MCH 1 (132 aa).

A signal peptide spans 1 to 24; sequence MRHSVLSISFAVALFLECYTPSTA. The cysteines at positions 120 and 129 are disulfide-linked.

The protein belongs to the melanin-concentrating hormone family. As to expression, pituitary gland. Produced in neurons of lateral basal hypothalamus which project both to the brain and to the neural lobe of the pituitary gland from where MCH is released.

Functionally, plays a role in skin pigmentation by antagonizing the action of melanotropin alpha. Induces melanin concentration within the melanophores. May participate in the control of the hypothalamo-pituitary adrenal gland axis by inhibiting the release of ACTH. The sequence is that of Pro-MCH 1 (mch1) from Oncorhynchus mykiss (Rainbow trout).